A 250-amino-acid chain; its full sequence is 5'-nucleotidase SurE (250 aa).

A divalent metal cation-binding residues include Asp8, Asp9, Ser40, and Asn94.

It belongs to the SurE nucleotidase family. It depends on a divalent metal cation as a cofactor.

Its subcellular location is the cytoplasm. The catalysed reaction is a ribonucleoside 5'-phosphate + H2O = a ribonucleoside + phosphate. Nucleotidase that shows phosphatase activity on nucleoside 5'-monophosphates. The sequence is that of 5'-nucleotidase SurE from Wolbachia sp. subsp. Drosophila simulans (strain wRi).